Here is a 396-residue protein sequence, read N- to C-terminus: Methylthioribose kinase (396 aa).

ATP contacts are provided by residues asparagine 44, lysine 61, and 115-117; that span reads EDL. Aspartate 233 provides a ligand contact to substrate. 250–252 contributes to the ATP binding site; sequence DPE. A substrate-binding site is contributed by arginine 340.

The protein belongs to the methylthioribose kinase family. In terms of assembly, homodimer.

The enzyme catalyses 5-(methylsulfanyl)-D-ribose + ATP = 5-(methylsulfanyl)-alpha-D-ribose 1-phosphate + ADP + H(+). It functions in the pathway amino-acid biosynthesis; L-methionine biosynthesis via salvage pathway; S-methyl-5-thio-alpha-D-ribose 1-phosphate from S-methyl-5'-thioadenosine (hydrolase route): step 2/2. Functionally, catalyzes the phosphorylation of methylthioribose into methylthioribose-1-phosphate. This chain is Methylthioribose kinase, found in Geobacillus thermodenitrificans (strain NG80-2).